Here is a 163-residue protein sequence, read N- to C-terminus: uncharacterized protein (163 aa).

The helical transmembrane segment at 7–23 (TLVAFIATFFNLAATSI) threads the bilayer.

The protein localises to the membrane. This is an uncharacterized protein from Saccharomyces cerevisiae (strain ATCC 204508 / S288c) (Baker's yeast).